We begin with the raw amino-acid sequence, 115 residues long: HTH-type transcriptional regulator SarR (115 aa).

Residues 51–74 constitute a DNA-binding region (H-T-H motif); sequence SKEIAKCSEFKPYYLTKALQKLKD.

Belongs to the SarA family. In terms of assembly, homodimer.

Its subcellular location is the cytoplasm. Its function is as follows. Negative regulator of sarA transcription at late exponential and stationary growth phases. It contributes to the modulation of target genes downstream of the sarA regulatory cascade. Also, positively regulates expression of primary transcripts RNAII and RNAIII generated by agr (virulence accessory gene regulator) locus. The sequence is that of HTH-type transcriptional regulator SarR (sarR) from Staphylococcus aureus (strain NCTC 8325 / PS 47).